The sequence spans 270 residues: Thiazole synthase (270 aa).

The Schiff-base intermediate with DXP role is filled by K111. 1-deoxy-D-xylulose 5-phosphate is bound by residues G172, 198–199 (AG), and 220–221 (NS). The interval 249–270 (AGRLPTRAQASPSSPTTGKVND) is disordered. A compositionally biased stretch (polar residues) spans 256–270 (AQASPSSPTTGKVND).

The protein belongs to the ThiG family. As to quaternary structure, homotetramer. Forms heterodimers with either ThiH or ThiS.

It is found in the cytoplasm. It catalyses the reaction [ThiS sulfur-carrier protein]-C-terminal-Gly-aminoethanethioate + 2-iminoacetate + 1-deoxy-D-xylulose 5-phosphate = [ThiS sulfur-carrier protein]-C-terminal Gly-Gly + 2-[(2R,5Z)-2-carboxy-4-methylthiazol-5(2H)-ylidene]ethyl phosphate + 2 H2O + H(+). Its pathway is cofactor biosynthesis; thiamine diphosphate biosynthesis. Functionally, catalyzes the rearrangement of 1-deoxy-D-xylulose 5-phosphate (DXP) to produce the thiazole phosphate moiety of thiamine. Sulfur is provided by the thiocarboxylate moiety of the carrier protein ThiS. In vitro, sulfur can be provided by H(2)S. This is Thiazole synthase from Synechococcus sp. (strain WH7803).